We begin with the raw amino-acid sequence, 335 residues long: Tetraacyldisaccharide 4'-kinase (335 aa).

Thr-59–Thr-66 is an ATP binding site.

The protein belongs to the LpxK family.

The catalysed reaction is a lipid A disaccharide + ATP = a lipid IVA + ADP + H(+). It participates in glycolipid biosynthesis; lipid IV(A) biosynthesis; lipid IV(A) from (3R)-3-hydroxytetradecanoyl-[acyl-carrier-protein] and UDP-N-acetyl-alpha-D-glucosamine: step 6/6. Functionally, transfers the gamma-phosphate of ATP to the 4'-position of a tetraacyldisaccharide 1-phosphate intermediate (termed DS-1-P) to form tetraacyldisaccharide 1,4'-bis-phosphate (lipid IVA). The protein is Tetraacyldisaccharide 4'-kinase of Aliivibrio salmonicida (strain LFI1238) (Vibrio salmonicida (strain LFI1238)).